A 277-amino-acid polypeptide reads, in one-letter code: Large ribosomal subunit protein uL2 (277 aa).

A disordered region spans residues 199-277 (DHMNTSVGKA…ILISRHKRKK (79 aa)). Positions 209–220 (GRTRWMGRRPHN) are enriched in basic residues.

This sequence belongs to the universal ribosomal protein uL2 family. In terms of assembly, part of the 50S ribosomal subunit. Forms a bridge to the 30S subunit in the 70S ribosome.

Functionally, one of the primary rRNA binding proteins. Required for association of the 30S and 50S subunits to form the 70S ribosome, for tRNA binding and peptide bond formation. It has been suggested to have peptidyltransferase activity; this is somewhat controversial. Makes several contacts with the 16S rRNA in the 70S ribosome. The chain is Large ribosomal subunit protein uL2 from Nitrobacter winogradskyi (strain ATCC 25391 / DSM 10237 / CIP 104748 / NCIMB 11846 / Nb-255).